The sequence spans 606 residues: Mitogen-activated protein kinase 20 (606 aa).

Residues 25–316 (FKVQEVIGKG…AEEALADPYF (292 aa)) form the Protein kinase domain. ATP-binding positions include 31 to 39 (IGKGSYGVV) and K54. The Proton acceptor role is filled by D151. T187 is subject to Phosphothreonine. Residues 187-189 (TDY) carry the TXY motif. Position 189 is a phosphotyrosine (Y189). The residue at position 192 (T192) is a Phosphothreonine.

It belongs to the protein kinase superfamily. CMGC Ser/Thr protein kinase family. MAP kinase subfamily. In terms of processing, dually phosphorylated on Thr-187 and Tyr-189, which activates the enzyme.

The enzyme catalyses L-seryl-[protein] + ATP = O-phospho-L-seryl-[protein] + ADP + H(+). The catalysed reaction is L-threonyl-[protein] + ATP = O-phospho-L-threonyl-[protein] + ADP + H(+). With respect to regulation, activated by threonine and tyrosine phosphorylation. The chain is Mitogen-activated protein kinase 20 (MPK20) from Arabidopsis thaliana (Mouse-ear cress).